Consider the following 384-residue polypeptide: Na(+)/H(+) antiporter NhaA (384 aa).

Transmembrane regions (helical) follow at residues serine 17–alanine 37, leucine 53–leucine 73, methionine 89–methionine 109, glycine 118–glycine 138, isoleucine 147–phenylalanine 167, threonine 171–asparagine 191, leucine 198–histidine 218, proline 251–serine 271, isoleucine 283–leucine 303, isoleucine 321–leucine 341, and phenylalanine 354–valine 374.

This sequence belongs to the NhaA Na(+)/H(+) (TC 2.A.33) antiporter family.

Its subcellular location is the cell inner membrane. The catalysed reaction is Na(+)(in) + 2 H(+)(out) = Na(+)(out) + 2 H(+)(in). Na(+)/H(+) antiporter that extrudes sodium in exchange for external protons. The polypeptide is Na(+)/H(+) antiporter NhaA (Flavobacterium psychrophilum (strain ATCC 49511 / DSM 21280 / CIP 103535 / JIP02/86)).